The following is a 1161-amino-acid chain: PAN2-PAN3 deadenylation complex catalytic subunit pan2 (1161 aa).

WD repeat units follow at residues 20–59 (GLPT…RYTS) and 276–315 (ANVS…HFNE). The tract at residues 316 to 452 (MSKEVEFADV…GAKLNGEAED (137 aa)) is linker. A USP domain is found at 453 to 822 (DPLLKYSNVE…SPCILAYQAK (370 aa)). The 179-residue stretch at 871-1049 (VALDTEFVDL…IEDARMALRL (179 aa)) folds into the Exonuclease domain. Aspartate 874, glutamate 876, aspartate 983, and aspartate 1042 together coordinate a divalent metal cation. Residues 1009–1060 (NRRLSLRYLAWAVFKEYIQEEPADNNQGHDSIEDARMALRLWKKFQEYEDAG) form a WD 4 repeat. Positions 1092-1161 (RPGTAVTMQN…GDFFGGSPLK (70 aa)) are disordered. A compositionally biased stretch (polar residues) spans 1097–1110 (VTMQNSSGRNTPST). The segment covering 1116–1129 (AATATATTSAPATP) has biased composition (low complexity). The span at 1145–1155 (TFGGPGAGDFF) shows a compositional bias: gly residues.

It belongs to the peptidase C19 family. PAN2 subfamily. Forms a heterotrimer with an asymmetric homodimer of the regulatory subunit pan3 to form the poly(A)-nuclease (PAN) deadenylation complex. The cofactor is a divalent metal cation.

It localises to the cytoplasm. It carries out the reaction Exonucleolytic cleavage of poly(A) to 5'-AMP.. Positively regulated by the regulatory subunit pan3. Its function is as follows. Catalytic subunit of the poly(A)-nuclease (PAN) deadenylation complex, one of two cytoplasmic mRNA deadenylases involved in mRNA turnover. PAN specifically shortens poly(A) tails of RNA and the activity is stimulated by poly(A)-binding protein pab1. PAN deadenylation is followed by rapid degradation of the shortened mRNA tails by the CCR4-NOT complex. Deadenylated mRNAs are then degraded by two alternative mechanisms, namely exosome-mediated 3'-5' exonucleolytic degradation, or deadenylation-dependent mRNA decaping and subsequent 5'-3' exonucleolytic degradation by xrn1. May also be involved in post-transcriptional maturation of mRNA poly(A) tails. The sequence is that of PAN2-PAN3 deadenylation complex catalytic subunit pan2 from Neosartorya fischeri (strain ATCC 1020 / DSM 3700 / CBS 544.65 / FGSC A1164 / JCM 1740 / NRRL 181 / WB 181) (Aspergillus fischerianus).